Consider the following 466-residue polypeptide: 3-isopropylmalate dehydratase large subunit (466 aa).

3 residues coordinate [4Fe-4S] cluster: Cys-347, Cys-407, and Cys-410.

It belongs to the aconitase/IPM isomerase family. LeuC type 1 subfamily. Heterodimer of LeuC and LeuD. [4Fe-4S] cluster is required as a cofactor.

It catalyses the reaction (2R,3S)-3-isopropylmalate = (2S)-2-isopropylmalate. The protein operates within amino-acid biosynthesis; L-leucine biosynthesis; L-leucine from 3-methyl-2-oxobutanoate: step 2/4. Functionally, catalyzes the isomerization between 2-isopropylmalate and 3-isopropylmalate, via the formation of 2-isopropylmaleate. This is 3-isopropylmalate dehydratase large subunit from Shewanella woodyi (strain ATCC 51908 / MS32).